A 64-amino-acid chain; its full sequence is uncharacterized protein (64 aa).

A helical membrane pass occupies residues 41–61; it reads VFLALKVLGIMVLFYLLDAII.

It localises to the membrane. This is an uncharacterized protein from Acheta domesticus (House cricket).